We begin with the raw amino-acid sequence, 232 residues long: MTNYREIAWQGLWKNNPGLVQRLGLCPLLAVTTTLTNALGLGIATMLVLIGSNVLISLVRDYVPKEIRIPVFVMIIAALVTAVQLLVNAYAYGLYMSLGIFLPLIVTNCIIIGRAEAFASRNNAFSSAFDGLMMGLGFTLVLVLLGATREILGQGTLFDGADQLLGPWAKALTFQVWQVDTSFLLAMLPPGAFIVMGLLIALKNVIDKKLRERQPETAVQPSVARARITKVS.

The next 5 helical transmembrane spans lie at 39–59, 69–89, 93–113, 128–148, and 182–202; these read LGLG…ISLV, IPVF…LVNA, GLYM…IIIG, AFDG…LGAT, and SFLL…LIAL.

The protein belongs to the NqrDE/RnfAE family. In terms of assembly, the complex is composed of six subunits: RnfA, RnfB, RnfC, RnfD, RnfE and RnfG.

It localises to the cell inner membrane. In terms of biological role, part of a membrane-bound complex that couples electron transfer with translocation of ions across the membrane. This Shewanella oneidensis (strain ATCC 700550 / JCM 31522 / CIP 106686 / LMG 19005 / NCIMB 14063 / MR-1) protein is Ion-translocating oxidoreductase complex subunit E.